A 139-amino-acid chain; its full sequence is Putative pre-16S rRNA nuclease (139 aa).

This sequence belongs to the YqgF nuclease family.

The protein localises to the cytoplasm. Could be a nuclease involved in processing of the 5'-end of pre-16S rRNA. The chain is Putative pre-16S rRNA nuclease from Streptococcus suis (strain 98HAH33).